The primary structure comprises 315 residues: Ribonuclease Z (315 aa).

Histidine 61, histidine 63, aspartate 65, histidine 66, histidine 151, aspartate 219, and histidine 278 together coordinate Zn(2+). Aspartate 65 acts as the Proton acceptor in catalysis.

Belongs to the RNase Z family. As to quaternary structure, homodimer. Zn(2+) is required as a cofactor.

It catalyses the reaction Endonucleolytic cleavage of RNA, removing extra 3' nucleotides from tRNA precursor, generating 3' termini of tRNAs. A 3'-hydroxy group is left at the tRNA terminus and a 5'-phosphoryl group is left at the trailer molecule.. In terms of biological role, zinc phosphodiesterase, which displays some tRNA 3'-processing endonuclease activity. Probably involved in tRNA maturation, by removing a 3'-trailer from precursor tRNA. The sequence is that of Ribonuclease Z from Clostridium botulinum (strain Alaska E43 / Type E3).